A 391-amino-acid chain; its full sequence is 4-hydroxy-3-methylbut-2-en-1-yl diphosphate synthase (flavodoxin) (391 aa).

[4Fe-4S] cluster is bound by residues cysteine 281, cysteine 284, cysteine 316, and glutamate 323. Residues 372-391 (EMGGEDGQGGIKGSPVVSVS) form a disordered region.

It belongs to the IspG family. [4Fe-4S] cluster serves as cofactor.

It catalyses the reaction (2E)-4-hydroxy-3-methylbut-2-enyl diphosphate + oxidized [flavodoxin] + H2O + 2 H(+) = 2-C-methyl-D-erythritol 2,4-cyclic diphosphate + reduced [flavodoxin]. The protein operates within isoprenoid biosynthesis; isopentenyl diphosphate biosynthesis via DXP pathway; isopentenyl diphosphate from 1-deoxy-D-xylulose 5-phosphate: step 5/6. Functionally, converts 2C-methyl-D-erythritol 2,4-cyclodiphosphate (ME-2,4cPP) into 1-hydroxy-2-methyl-2-(E)-butenyl 4-diphosphate. This Renibacterium salmoninarum (strain ATCC 33209 / DSM 20767 / JCM 11484 / NBRC 15589 / NCIMB 2235) protein is 4-hydroxy-3-methylbut-2-en-1-yl diphosphate synthase (flavodoxin).